Consider the following 266-residue polypeptide: Glucosamine-6-phosphate deaminase (266 aa).

The active-site Proton acceptor; for enolization step is aspartate 72. The For ring-opening step role is filled by aspartate 141. The active-site Proton acceptor; for ring-opening step is the histidine 143. Residue glutamate 148 is the For ring-opening step of the active site.

The protein belongs to the glucosamine/galactosamine-6-phosphate isomerase family. NagB subfamily. Homohexamer.

It carries out the reaction alpha-D-glucosamine 6-phosphate + H2O = beta-D-fructose 6-phosphate + NH4(+). It participates in amino-sugar metabolism; N-acetylneuraminate degradation; D-fructose 6-phosphate from N-acetylneuraminate: step 5/5. With respect to regulation, allosterically activated by N-acetylglucosamine 6-phosphate (GlcNAc6P). In terms of biological role, catalyzes the reversible isomerization-deamination of glucosamine 6-phosphate (GlcN6P) to form fructose 6-phosphate (Fru6P) and ammonium ion. In Erwinia tasmaniensis (strain DSM 17950 / CFBP 7177 / CIP 109463 / NCPPB 4357 / Et1/99), this protein is Glucosamine-6-phosphate deaminase.